Here is a 185-residue protein sequence, read N- to C-terminus: Dihydrofolate reductase 1 (185 aa).

In terms of domain architecture, DHFR spans 8 to 185; sequence ELVLVVAADE…QASPRPLDDL (178 aa).

It belongs to the dihydrofolate reductase family.

It carries out the reaction (6S)-5,6,7,8-tetrahydrofolate + NADP(+) = 7,8-dihydrofolate + NADPH + H(+). Its pathway is cofactor biosynthesis; tetrahydrofolate biosynthesis; 5,6,7,8-tetrahydrofolate from 7,8-dihydrofolate: step 1/1. Its function is as follows. Key enzyme in folate metabolism. Catalyzes an essential reaction for de novo glycine and purine synthesis, and for DNA precursor synthesis. In Haloarcula marismortui (strain ATCC 43049 / DSM 3752 / JCM 8966 / VKM B-1809) (Halobacterium marismortui), this protein is Dihydrofolate reductase 1 (folA1).